A 4144-amino-acid polypeptide reads, in one-letter code: DNA-dependent protein kinase catalytic subunit (4144 aa).

An N6-acetyllysine modification is found at Lys127. One copy of the HEAT 1 repeat lies at 298 to 333; it reads DNYVSLFEVLSKWCSHTNVEMKKAAHSALESFLKQV. Residues Ser521, Ser851, and Ser903 each carry the phosphoserine modification. Residues 1014-1050 form an HEAT 2 repeat; it reads QDTVALLETILDGIVDPVDSTLRDFCGRCIREFLKWS. Ser1075 is subject to Phosphoserine. Position 1219 is an N6-acetyllysine (Lys1219). An interaction with C1D region spans residues 1516 to 1551; sequence LDPSCKRLASGLLELAFAFGGLCEHLVDLLLDTAVL. Positions 1516-1551 are leucine-zipper; sequence LDPSCKRLASGLLELAFAFGGLCEHLVDLLLDTAVL. One copy of the TPR 1 repeat lies at 1736-1769; that stretch reads PMKSEEFPVGTLRYSNYVDCMKKFLDALELSQSP. Lys1983 bears the N6-acetyllysine mark. Ser2069 is modified (phosphoserine; by autocatalysis). Lys2271 is modified (N6-acetyllysine). The segment at 2448–3228 is KIP-binding; the sequence is LDIIYKMMAK…DHSLSMDEER (781 aa). Thr2547 carries the phosphothreonine modification. Thr2621 carries the post-translational modification Phosphothreonine; by autocatalysis. At Ser2624 the chain carries Phosphoserine; by autocatalysis. Thr2650 and Thr2659 each carry phosphothreonine; by autocatalysis. A disordered region spans residues 2697–2729; it reads AQKRNEKSQRAPLKSVGPDFGEKKLGLPGDKVD. Residues 2716-2729 show a composition bias toward basic and acidic residues; sequence FGEKKLGLPGDKVD. The interval 2753 to 2781 is may split the end of the DNA molecule, with the two strands separating around the region; sequence EKLSLIYARKGIAEQKREKEIKSELKMKH. Phosphoserine is present on Ser2805. 3 TPR repeats span residues 2903–2935, 2936–2964, and 2965–2998; these read PVGV…VSPD, VVRW…SEIG, and TKQI…EEWV. The FAT domain occupies 2922–3555; sequence PAKQFKGRMR…VYPFIISSES (634 aa). The residue at position 3221 (Ser3221) is a Phosphoserine. N6-acetyllysine is present on residues Lys3257, Lys3276, Lys3654, and Lys3658. The stretch at 3711–3748 is one TPR 5 repeat; the sequence is LRNELEIPGQYDGKGKPLPEYHARIAGFDERIKVMASI. Positions 3738 to 4069 constitute a PI3K/PI4K catalytic domain; sequence FDERIKVMAS…IHYAKRKLAG (332 aa). The interval 3744–3750 is G-loop; sequence VMASIRK. Residues Ser3747 and Ser3837 each carry the phosphoserine modification. A catalytic loop region spans residues 3935-3943; it reads GIGDRHLNN. The interval 3955–3980 is activation loop; sequence GIDFGHAFGSATQFLPVPELMPFRLT. Ser4042 carries the post-translational modification Phosphoserine. Positions 4112–4144 constitute an FATC domain; that stretch reads NGLSEEAQVKCLIDQATDPNILGRTWIGWEPWM.

The protein belongs to the PI3/PI4-kinase family. As to quaternary structure, DNA-PK is a heterotrimer of PRKDC and the Ku dimer (composed of XRCC6/Ku70 and XRCC5/Ku86). Formation of this complex may be promoted by interaction with ILF3. Component of the core long-range non-homologous end joining (NHEJ) complex (also named DNA-PK complex) composed of PRKDC, LIG4, XRCC4, XRCC6/Ku70, XRCC5/Ku86 and NHEJ1/XLF. Additional component of the NHEJ complex includes PAXX. Following autophosphorylation, PRKDC dissociates from DNA. Interacts with DNA-PKcs-interacting protein (KIP) with the region upstream the kinase domain. PRKDC alone also interacts with and phosphorylates DCLRE1C, thereby activating the latent endonuclease activity of this protein. Interacts with C1D. Interacts with TTI1 and TELO2. Interacts with CIB1. Interacts with SETX. Interacts with NR4A3; the DNA-dependent protein kinase complex DNA-PK phosphorylates and activates NR4A3 and prevents NR4A3 ubiquitination and degradation. Interacts with BRAT1. Part of the HDP-RNP complex composed of at least HEXIM1, PRKDC, XRCC5, XRCC6, paraspeckle proteins (SFPQ, NONO, PSPC1, RBM14, and MATR3) and NEAT1 RNA. Interacts with KAT5. Autophosphorylated at two clusters, the T2609 cluster and the S2056 cluster. Autophosphorylated on Ser-2069, Thr-2621, Thr-2650 and Thr-2659. Ser-2069 and Thr-2621 are DNA damage-inducible phosphorylation sites (inducible with ionizing radiation, IR) dephosphorylated by PPP5C. Autophosphorylation induces a conformational change that leads to remodeling of the DNA-PK complex, requisite for efficient end processing and DNA repair. Autophosphorylation in trans within DNA-PK complexes loaded on DNA ends leads to the dissociation of PRKDC from DNA and the transition into the short-range NHEJ complex. Autophosphorylation of the T2609 cluster is required for hematopoietic development and protein synthesis in erythrocytes precursors. In terms of processing, S-nitrosylated by GAPDH. Post-translationally, polyubiquitinated by RNF144A, leading to proteasomal degradation.

Its subcellular location is the nucleus. The protein localises to the nucleolus. It localises to the cytoplasm. It is found in the cytosol. It catalyses the reaction L-seryl-[protein] + ATP = O-phospho-L-seryl-[protein] + ADP + H(+). The catalysed reaction is L-threonyl-[protein] + ATP = O-phospho-L-threonyl-[protein] + ADP + H(+). Its activity is regulated as follows. Activity seems to be attenuated by autophosphorylation. Binding to the SL1 region of U3 small nucleolar RNA promotes auto-phosphorylation activity. Inhibited by wortmannin. Functionally, serine/threonine-protein kinase that acts as a molecular sensor for DNA damage. Involved in DNA non-homologous end joining (NHEJ) required for double-strand break (DSB) repair and V(D)J recombination. Must be bound to DNA to express its catalytic properties. Promotes processing of hairpin DNA structures in V(D)J recombination by activation of the hairpin endonuclease artemis (DCLRE1C). Recruited by XRCC5 and XRCC6 to DNA ends and is required to (1) protect and align broken ends of DNA, thereby preventing their degradation, (2) and sequester the DSB for repair by NHEJ. Acts as a scaffold protein to aid the localization of DNA repair proteins to the site of damage. The assembly of the DNA-PK complex at DNA ends is also required for the NHEJ ligation step. Found at the ends of chromosomes, suggesting a further role in the maintenance of telomeric stability and the prevention of chromosomal end fusion. Also involved in modulation of transcription. As part of the DNA-PK complex, involved in the early steps of ribosome assembly by promoting the processing of precursor rRNA into mature 18S rRNA in the small-subunit processome. Binding to U3 small nucleolar RNA, recruits PRKDC and XRCC5/Ku86 to the small-subunit processome. Recognizes the substrate consensus sequence [ST]-Q. Phosphorylates 'Ser-139' of histone variant H2AX, thereby regulating DNA damage response mechanism. Phosphorylates ASF1A, DCLRE1C, c-Abl/ABL1, histone H1, HSPCA, c-jun/JUN, p53/TP53, PARP1, POU2F1, DHX9, FH, SRF, NHEJ1/XLF, XRCC1, XRCC4, XRCC5, XRCC6, WRN, MYC and RFA2. Can phosphorylate C1D not only in the presence of linear DNA but also in the presence of supercoiled DNA. Ability to phosphorylate p53/TP53 in the presence of supercoiled DNA is dependent on C1D. Acts as a regulator of the phosphatidylinositol 3-kinase/protein kinase B signal transduction by mediating phosphorylation of 'Ser-473' of protein kinase B (PKB/AKT1, PKB/AKT2, PKB/AKT3), promoting their activation. Contributes to the determination of the circadian period length by antagonizing phosphorylation of CRY1 'Ser-588' and increasing CRY1 protein stability, most likely through an indirect mechanism. Plays a role in the regulation of DNA virus-mediated innate immune response by assembling into the HDP-RNP complex, a complex that serves as a platform for IRF3 phosphorylation and subsequent innate immune response activation through the cGAS-STING pathway. Also regulates the cGAS-STING pathway by catalyzing phosphorylation of CGAS, thereby impairing CGAS oligomerization and activation. Also regulates the cGAS-STING pathway by mediating phosphorylation of PARP1. The sequence is that of DNA-dependent protein kinase catalytic subunit (PRKDC) from Canis lupus familiaris (Dog).